The sequence spans 200 residues: Cysteine dioxygenase type 1 (200 aa).

Residues His86, His88, and His140 each contribute to the Fe cation site. Residues 93 to 157 constitute a cross-link (3'-(S-cysteinyl)-tyrosine (Cys-Tyr)); sequence CFLKMLQGNL…TEPAVSLHLY (65 aa).

It belongs to the cysteine dioxygenase family. Monomer. Fe cation is required as a cofactor. Requires Ni(2+) as cofactor. It depends on Zn(2+) as a cofactor. In terms of processing, the thioether cross-link between Cys-93 and Tyr-157 plays a structural role through stabilizing the Fe(2+) ion, and prevents the production of highly damaging free hydroxyl radicals by holding the oxygen radical via hydroxyl hydrogen.

It carries out the reaction L-cysteine + O2 = 3-sulfino-L-alanine + H(+). It participates in organosulfur biosynthesis; taurine biosynthesis; hypotaurine from L-cysteine: step 1/2. Catalyzes the oxidation of cysteine to cysteine sulfinic acid with addition of molecular dioxygen. This Bos taurus (Bovine) protein is Cysteine dioxygenase type 1 (CDO1).